The primary structure comprises 798 residues: Integrin beta-1 (798 aa).

The signal sequence occupies residues 1–20 (MNLQLIFWIGLISSICCVFG). Residues 21-728 (QADENRCLKA…ETPECPTGPD (708 aa)) lie on the Extracellular side of the membrane. A PSI domain is found at 26–76 (RCLKANAKSCGECIQAGPNCGWCVNSTFLQEGMPTSARCDDLEALKKKGCH). Cystine bridges form between Cys-27-Cys-45, Cys-35-Cys-464, Cys-38-Cys-64, Cys-48-Cys-75, Cys-207-Cys-213, Cys-261-Cys-301, Cys-401-Cys-415, Cys-435-Cys-462, Cys-466-Cys-486, Cys-477-Cys-489, Cys-491-Cys-500, Cys-502-Cys-533, Cys-516-Cys-531, Cys-525-Cys-536, Cys-538-Cys-553, Cys-555-Cys-576, Cys-560-Cys-574, Cys-568-Cys-579, Cys-581-Cys-590, Cys-592-Cys-615, Cys-599-Cys-613, Cys-607-Cys-618, Cys-620-Cys-630, Cys-633-Cys-636, Cys-640-Cys-691, Cys-646-Cys-665, Cys-649-Cys-661, and Cys-699-Cys-723. The N-linked (GlcNAc...) asparagine glycan is linked to Asn-50. Positions 75–91 (CHPDDIENPRGSKDVKK) are enriched in basic and acidic residues. Positions 75 to 107 (CHPDDIENPRGSKDVKKNKNVTNRSKGTAEKLQ) are disordered. 2 N-linked (GlcNAc...) asparagine glycosylation sites follow: Asn-94 and Asn-97. Residues 140–378 (DYPIDLYYLM…QLIIDAYNSL (239 aa)) enclose the VWFA domain. 2 residues coordinate Mg(2+): Ser-152 and Ser-154. Residues Ser-154, Asp-157, Asp-158, and Glu-189 each contribute to the Ca(2+) site. The CX3CL1-binding stretch occupies residues 207–213 (CTSEQNC). The N-linked (GlcNAc...) asparagine glycan is linked to Asn-212. Residues Asn-244, Asp-246, Pro-248, and Glu-249 each contribute to the Ca(2+) site. Glu-249 serves as a coordination point for Mg(2+). An N-linked (GlcNAc...) asparagine glycan is attached at Asn-269. Residues 295–314 (LPNDGQCHLENDVYTMSHYY) are CX3CL1-binding. Ca(2+) is bound at residue Ala-362. N-linked (GlcNAc...) asparagine glycosylation is found at Asn-363, Asn-406, and Asn-417. Residues 383–465 (ILENSKLPEG…IILQFICECE (83 aa)) form an interaction with TMEM182 region. I-EGF domains lie at 466–501 (CQNE…RHCE), 502–554 (CSTD…KFCE), 555–591 (CDNF…SACD), and 592–631 (CSLD…PTCE). The N-linked (GlcNAc...) asparagine glycan is linked to Asn-481. N-linked (GlcNAc...) asparagine glycosylation occurs at Asn-520. A glycan (N-linked (GlcNAc...) asparagine) is linked at Asn-584. Residue Asn-669 is glycosylated (N-linked (GlcNAc...) asparagine). Residues 729-751 (IIPIVAGVVAGIVLIGLALLLIW) form a helical membrane-spanning segment. Topologically, residues 752 to 798 (KLLMIIHDTREFAKFEKEKMNAKWDTGENPIYKSAVTTVVNPKYEGK) are cytoplasmic. Residues 762–767 (EFAKFE) form a signal for sorting from recycling endosomes; interaction with ACAP1 region. Thr-777 carries the post-translational modification Phosphothreonine. Tyr-783 bears the Phosphotyrosine mark. Residue Ser-785 is modified to Phosphoserine. The tract at residues 785–792 (SAVTTVVN) is interaction with ITGB1BP1. Thr-789 is subject to Phosphothreonine. Lys-794 carries the N6-acetyllysine; alternate modification. A Glycyl lysine isopeptide (Lys-Gly) (interchain with G-Cter in SUMO1); alternate cross-link involves residue Lys-794.

It belongs to the integrin beta chain family. Interacts with seprase FAP (seprase); the interaction occurs at the cell surface of invadopodia membrane in a collagen-dependent manner. Heterodimer of an alpha and a beta subunit. Beta-1 associates with either alpha-1, alpha-2, alpha-3, alpha-4, alpha-5, alpha-6, alpha-7, alpha-8, alpha-9, alpha-10, alpha-11 or alpha-V. ITGA6:ITGB1 is found in a complex with CD9; interaction takes place in oocytes and is involved in sperm-egg fusion. Binds LGALS3BP and NMRK2, when associated with alpha-7, but not with alpha-5. Interacts with FLNA, FLNB, FLNC and RANBP9. Interacts with KRT1 in the presence of RACK1 and SRC. Interacts with JAML; integrin alpha-4/beta-1 may regulate leukocyte to endothelial cells adhesion by controlling JAML homodimerization. Interacts with RAB21. Interacts (via the cytoplasmic region) with RAB25 (via the hypervariable C-terminal region). Interacts with MYO10. Interacts with ITGB1BP1 (via C-terminal region); the interaction is a prerequisite for focal adhesion disassembly. Interacts with TLN1; the interaction is prevented by competitive binding of ITGB1BP1. Interacts with ACAP1; required for ITGB1 recycling. Interacts with ASAP3. Interacts with FERMT2; the interaction is inhibited in presence of ITGB1BP1. Interacts with DAB2. Interacts with FGR and HCK. Interacts with alpha-7A and alpha-7B in adult skeletal muscle. Interacts with alpha-7B in cardiomyocytes of adult heart. Interacts with EMP2; the interaction may be direct or indirect and ITGB1 has a heterodimer form. ITGA5:ITGB1 interacts with CCN3. ITGA4:ITGB1 is found in a ternary complex with CX3CR1 and CX3CL1. ITGA5:ITGB1 interacts with FBN1. ITGA5:ITGB1 acts as a receptor for fibronectin FN1 and mediates R-G-D-dependent cell adhesion to FN1. ITGA5:ITGB1 interacts with IL1B. Interacts with MDK. ITGA4:ITGB1 interacts with MDK; this interaction mediates MDK-induced osteoblast cells migration through PXN phosphorylation. ITGA6:ITGB1 interacts with MDK; this interaction mediates MDK-induced neurite-outgrowth. ITGA5:ITGB1 interacts with ACE2. Interacts with TMEM182 and LAMB1. Interacts with tensin TNS3; TNS3 also interacts with PEAK1, thus acting as an adapter molecule to bridge the association of PEAK1 with ITGB1. Interacts with tensin TNS4; the interaction displaces tensin TNS3 from the ITGB1 cytoplasmic tail and promotes ITGB1 stability. Integrin ITGA9:ITGB1 interacts with SPP1/OPN (via N-terminus). Integrin ITGA9:ITGB1 interacts with TNC/TNFN3 (via the 3rd Fibronectin type-III domain). Integrins ITGA4:ITGB1 and ITGA9:ITGB1 interact with SVEP1 (via Sushi domain 21); thereby inhibit Ca(2+) intracellular signaling and as a result repress vasocontraction. ITGA4:ITGB1 and ITGA5:ITGB1 interacts with SELP. Interacts with CD248. ITGA5:ITGB1 interacts with IGFBP1. ITGA4:ITGB1 interacts with BCAM. Interacts with ADGRG6.

It is found in the cell membrane. The protein resides in the cell projection. The protein localises to the invadopodium membrane. Its subcellular location is the ruffle membrane. It localises to the recycling endosome. It is found in the melanosome. The protein resides in the lamellipodium. The protein localises to the ruffle. Its subcellular location is the cell junction. It localises to the focal adhesion. Functionally, integrins alpha-1/beta-1, alpha-2/beta-1, alpha-10/beta-1 and alpha-11/beta-1 are receptors for collagen. Integrins alpha-1/beta-1 and alpha-2/beta-2 recognize the proline-hydroxylated sequence G-F-P-G-E-R in collagen. Integrins alpha-2/beta-1, alpha-3/beta-1, alpha-4/beta-1, alpha-5/beta-1, alpha-8/beta-1, alpha-10/beta-1, alpha-11/beta-1 and alpha-V/beta-1 are receptors for fibronectin. Alpha-4/beta-1 recognizes one or more domains within the alternatively spliced CS-1 and CS-5 regions of fibronectin. Integrin alpha-5/beta-1 is a receptor for fibrinogen. Integrin alpha-1/beta-1, alpha-2/beta-1, alpha-6/beta-1 and alpha-7/beta-1 are receptors for lamimin. Integrin alpha-6/beta-1 (ITGA6:ITGB1) is present in oocytes and is involved in sperm-egg fusion. Integrin alpha-4/beta-1 is a receptor for VCAM1 and recognizes the sequence Q-I-D-S in VCAM1. Integrin alpha-9/beta-1 is a receptor for VCAM1, cytotactin and osteopontin. It recognizes the sequence A-E-I-D-G-I-E-L in cytotactin. Integrin alpha-3/beta-1 is a receptor for epiligrin, thrombospondin and CSPG4. Integrin alpha-3/beta-1 provides a docking site for FAP (seprase) at invadopodia plasma membranes in a collagen-dependent manner and hence may participate in the adhesion, formation of invadopodia and matrix degradation processes, promoting cell invasion. Alpha-3/beta-1 may mediate with LGALS3 the stimulation by CSPG4 of endothelial cells migration. Integrin alpha-V/beta-1 is a receptor for vitronectin. Beta-1 integrins recognize the sequence R-G-D in a wide array of ligands. When associated with alpha-7/beta-1 integrin, regulates cell adhesion and laminin matrix deposition. Involved in promoting endothelial cell motility and angiogenesis. Involved in osteoblast compaction through the fibronectin fibrillogenesis cell-mediated matrix assembly process and the formation of mineralized bone nodules. May be involved in up-regulation of the activity of kinases such as PKC via binding to KRT1. Together with KRT1 and RACK1, serves as a platform for SRC activation or inactivation. Plays a mechanistic adhesive role during telophase, required for the successful completion of cytokinesis. ITGA4:ITGB1 binds to fractalkine (CX3CL1) and may act as its coreceptor in CX3CR1-dependent fractalkine signaling. ITGA4:ITGB1 and ITGA5:ITGB1 bind to PLA2G2A via a site (site 2) which is distinct from the classical ligand-binding site (site 1) and this induces integrin conformational changes and enhanced ligand binding to site 1. ITGA5:ITGB1 acts as a receptor for fibrillin-1 (FBN1) and mediates R-G-D-dependent cell adhesion to FBN1. ITGA5:ITGB1 is a receptor for IL1B and binding is essential for IL1B signaling. ITGA5:ITGB3 is a receptor for soluble CD40LG and is required for CD40/CD40LG signaling. Plays an important role in myoblast differentiation and fusion during skeletal myogenesis. ITGA9:ITGB1 may play a crucial role in SVEP1/polydom-mediated myoblast cell adhesion. Integrins ITGA9:ITGB1 and ITGA4:ITGB1 repress PRKCA-mediated L-type voltage-gated channel Ca(2+) influx and ROCK-mediated calcium sensitivity in vascular smooth muscle cells via their interaction with SVEP1, thereby inhibit vasocontraction. The chain is Integrin beta-1 (ITGB1) from Felis catus (Cat).